Here is a 134-residue protein sequence, read N- to C-terminus: Protein PsiE homolog (134 aa).

Transmembrane regions (helical) follow at residues 14-34 (LQWILNIALIILSIVLSIFLI), 56-76 (VESIIVYFLYFEFIALIIKYF), 82-102 (FPLRYFIYIGITALIRLIIVS), and 106-126 (PMETLLYAGAILVLVIALYIS).

The protein belongs to the PsiE family.

Its subcellular location is the cell membrane. The protein is Protein PsiE homolog of Bacillus anthracis.